An 88-amino-acid polypeptide reads, in one-letter code: Conotoxin VxVIB (88 aa).

The first 22 residues, 1–22, serve as a signal peptide directing secretion; that stretch reads MNLACVLIVAVLFLTASQLATA. A propeptide spanning residues 23–52 is cleaved from the precursor; sequence ASYARDKQEYPAVRSSDEMQDSEDLTLTKE. 3 disulfide bridges follow: Cys-53/Cys-68, Cys-60/Cys-72, and Cys-67/Cys-81.

In terms of tissue distribution, expressed by the venom duct.

The protein resides in the secreted. May act as a neurotoxin, but produces no obvious effect on ionic currents when tested on the mouse dorsal rooted ganglia (DRG). This is Conotoxin VxVIB from Conus vexillum (Flag cone).